Consider the following 60-residue polypeptide: Mastoparan-A (60 aa).

The signal sequence occupies residues 1-27 (MKNTILILFTAFIALLGFFGMSAEALA). AXPX repeat units lie at residues 27–30 (ADPI), 31–34 (ADPL), 35–38 (AGPN), and 41–43 (ADP). A propeptide spanning residues 28–45 (DPIADPLAGPNAEADPEA) is cleaved from the precursor. Ile59 bears the Isoleucine amide mark.

It belongs to the MCD family. Mastoparan subfamily. In terms of tissue distribution, expressed by the venom gland.

Its subcellular location is the secreted. The protein localises to the target cell membrane. Functionally, antimicrobial and mast cell degranulating peptide. Has broad spectrum antibacterial activity against both Gram-positive and Gram-negative bacteria (S.aureus MIC=32-64 ug/ml, S.xylosus MIC=2 ug/ml, S.alactolyticus MIC=12 ug/ml, C.koseri MIC=4 ug/ml, E.coli MIC=8 ug/ml, K.pneumoniae MIC=32 ug/ml, P.aerugiosa MIC=192 ug/ml, S.choleraesuis MIC=32 ug/ml, S.typhimurium MIC=32 ug/ml, V.parahamelytics MIC=16 ug/ml). Affects membrane permeability of E.coli. Shows hemolytic activities on sheep, chicken and human erythrocytes. Its mast cell degranulation activity may be related to the activation of G-protein coupled receptors in mast cells as well as interaction with other proteins located in cell endosomal membranes in the mast cells. This Vespa analis (Yellow-vented hornet) protein is Mastoparan-A.